Here is a 97-residue protein sequence, read N- to C-terminus: Co-chaperonin GroES (97 aa).

It belongs to the GroES chaperonin family. Heptamer of 7 subunits arranged in a ring. Interacts with the chaperonin GroEL.

It localises to the cytoplasm. Together with the chaperonin GroEL, plays an essential role in assisting protein folding. The GroEL-GroES system forms a nano-cage that allows encapsulation of the non-native substrate proteins and provides a physical environment optimized to promote and accelerate protein folding. GroES binds to the apical surface of the GroEL ring, thereby capping the opening of the GroEL channel. The chain is Co-chaperonin GroES from Buchnera aphidicola subsp. Cinara cedri (strain Cc).